Reading from the N-terminus, the 210-residue chain is Large ribosomal subunit protein uL4 (210 aa).

The tract at residues 44 to 79 (QHQGTHKVKTRSEVSGGGRKPYRQKGTGNARRGSSR) is disordered.

It belongs to the universal ribosomal protein uL4 family. In terms of assembly, part of the 50S ribosomal subunit.

Functionally, one of the primary rRNA binding proteins, this protein initially binds near the 5'-end of the 23S rRNA. It is important during the early stages of 50S assembly. It makes multiple contacts with different domains of the 23S rRNA in the assembled 50S subunit and ribosome. Its function is as follows. Forms part of the polypeptide exit tunnel. The chain is Large ribosomal subunit protein uL4 from Chloroherpeton thalassium (strain ATCC 35110 / GB-78).